Reading from the N-terminus, the 316-residue chain is Iron-sulfur cluster assembly SufBD family protein MJ0034 (316 aa).

This sequence belongs to the iron-sulfur cluster assembly SufBD family.

The protein is Iron-sulfur cluster assembly SufBD family protein MJ0034 of Methanocaldococcus jannaschii (strain ATCC 43067 / DSM 2661 / JAL-1 / JCM 10045 / NBRC 100440) (Methanococcus jannaschii).